Reading from the N-terminus, the 758-residue chain is Catalase-peroxidase (758 aa).

Polar residues predominate over residues Met-1–Val-10. A disordered region spans residues Met-1 to Arg-57. Residues Trp-128–Tyr-250 constitute a cross-link (tryptophyl-tyrosyl-methioninium (Trp-Tyr) (with M-276)). His-129 acts as the Proton acceptor in catalysis. The tryptophyl-tyrosyl-methioninium (Tyr-Met) (with W-128) cross-link spans Tyr-250 to Met-276. His-291 provides a ligand contact to heme b.

This sequence belongs to the peroxidase family. Peroxidase/catalase subfamily. As to quaternary structure, homodimer or homotetramer. Heme b serves as cofactor. Post-translationally, formation of the three residue Trp-Tyr-Met cross-link is important for the catalase, but not the peroxidase activity of the enzyme.

The enzyme catalyses H2O2 + AH2 = A + 2 H2O. It carries out the reaction 2 H2O2 = O2 + 2 H2O. Its function is as follows. Bifunctional enzyme with both catalase and broad-spectrum peroxidase activity. This is Catalase-peroxidase from Salinispora tropica (strain ATCC BAA-916 / DSM 44818 / JCM 13857 / NBRC 105044 / CNB-440).